The sequence spans 404 residues: Cysteine desulfurase IscS (404 aa).

Residues 75-76, asparagine 155, glutamine 183, and 203-205 each bind pyridoxal 5'-phosphate; these read AT and SGH. An N6-(pyridoxal phosphate)lysine modification is found at lysine 206. A pyridoxal 5'-phosphate-binding site is contributed by threonine 243. Cysteine 328 (cysteine persulfide intermediate) is an active-site residue. Cysteine 328 is a binding site for [2Fe-2S] cluster.

It belongs to the class-V pyridoxal-phosphate-dependent aminotransferase family. NifS/IscS subfamily. In terms of assembly, homodimer. Forms a heterotetramer with IscU, interacts with other sulfur acceptors. Requires pyridoxal 5'-phosphate as cofactor.

It is found in the cytoplasm. It catalyses the reaction (sulfur carrier)-H + L-cysteine = (sulfur carrier)-SH + L-alanine. It participates in cofactor biosynthesis; iron-sulfur cluster biosynthesis. Functionally, master enzyme that delivers sulfur to a number of partners involved in Fe-S cluster assembly, tRNA modification or cofactor biosynthesis. Catalyzes the removal of elemental sulfur atoms from cysteine to produce alanine. Functions as a sulfur delivery protein for Fe-S cluster synthesis onto IscU, an Fe-S scaffold assembly protein, as well as other S acceptor proteins. The chain is Cysteine desulfurase IscS from Shewanella baltica (strain OS155 / ATCC BAA-1091).